Here is a 482-residue protein sequence, read N- to C-terminus: MGSQETNLPPHVLIFPLPIQGHVNSMLRLAELLCLAELDITFIVSEFSHSRLIKHTNVASRFARYPGFQFQPISDGLPDDHPRAGERVMDILPSTKNVTGPLFKQMMVENKCFSSATRRPITCIIADGVLSFAGDFAQEKGIPLIYFRTVSACSFWACFCMPELIESGDIPIKGNGMDLIVKSVPGMETFLRRRDLPGFCRVNDINEPKLQILKTETRQTTRAQAAILNTFEDLEGPILSQIRKHMPRLFTIGPSHSHLTSRLETKNIKTLISSGSFWEEDRSCVDWLDAQPPRSVLYVSFGSITVVTRDQLLEFWYGLVNSGQRFLWVMRPDSIMGKDGQSQIPADLEEGTKARGYMVGWAPQEEVLNHPAIGGFLTHSGWNSTLESIVAGVPMICWPYFADQMINSRFVSEIWKIGLDMKDTCDRETIVKMVRELMEIRKDEFLQRADHMAKLAKEAVSEGGSSYSNLDGLVDYIKSLII.

Residue His22 is the Proton acceptor of the active site. His22 lines the an anthocyanidin pocket. The active-site Charge relay is the Asp127. Thr149, Ala362, Gln364, His379, Trp382, Asn383, Ser384, and Glu387 together coordinate UDP-alpha-D-glucose. Ala402 serves as a coordination point for an anthocyanidin. UDP-alpha-D-glucose is bound by residues Asp403 and Gln404.

Belongs to the UDP-glycosyltransferase family. Expressed in the leaf internal phloem-associated parenchyma (IPAP) inside the mesophyll. Mostly observed in leaves, roots and stems, and, to a lower extent, in flowers.

The protein resides in the nucleus. It is found in the cytoplasm. Its subcellular location is the cytosol. The catalysed reaction is 7-deoxyloganetate + UDP-alpha-D-glucose = 7-deoxyloganate + UDP + H(+). It functions in the pathway alkaloid biosynthesis. In terms of biological role, component of the seco-iridoid and derivatives monoterpenoid indole alkaloids (MIAs, e.g. vincristine, quinine, and strychnine) biosynthesis pathway. Catalyzes the glucosylation of 7-deoxyloganetic acid to form 7-deoxyloganic acid using UDP-glucose as the sugar donor. Inactive with loganetic acid, loganetin, iridodial, iridotrial, 8-OH-geraniol, jasmonic acid, gibberellic acid, indole acetic acid, salicylic acid, abscisic acid, zeatin and luteolin. The polypeptide is 7-deoxyloganetic acid glucosyl transferase (Catharanthus roseus (Madagascar periwinkle)).